The sequence spans 205 residues: Large ribosomal subunit protein uL4 (205 aa).

The interval 43–78 (ARAGTKAQKTRSEVAGGGKKPWRQKGTGNARAGTIR) is disordered.

It belongs to the universal ribosomal protein uL4 family. As to quaternary structure, part of the 50S ribosomal subunit.

Its function is as follows. One of the primary rRNA binding proteins, this protein initially binds near the 5'-end of the 23S rRNA. It is important during the early stages of 50S assembly. It makes multiple contacts with different domains of the 23S rRNA in the assembled 50S subunit and ribosome. Forms part of the polypeptide exit tunnel. In Halorhodospira halophila (strain DSM 244 / SL1) (Ectothiorhodospira halophila (strain DSM 244 / SL1)), this protein is Large ribosomal subunit protein uL4.